Here is a 315-residue protein sequence, read N- to C-terminus: MESEAGTNRTAVAEFMLLGLVQTEEMQSVIFVLLLFAYLVTTGGNLSILAAILVEPKLHTPMYFFLGNLSVLDVGCITVTVPAMLGRLLSHKSTISYDACLSQLFFFHLLAGMDCFLLTAMAYDRFLAICRPLTYSTHMNQRVQRMLVAVSWTCAFTNALTHTIALTTLNFCGPSVINHFYCDLPQLFQLSCSSTQLNELLLFVAAAVMAVAPLVFISVSYAHVVAAVLQIHSAEGRKKAFSTCGSHLTVVGIFYGTGVFSYMRLGSVESSDKDKGVGVFMTVINPMLNPLIYSLRNTDVQGALCQLLVVKRSLT.

Over M1 to S28 the chain is Extracellular. N8 carries an N-linked (GlcNAc...) asparagine glycan. A helical transmembrane segment spans residues V29 to I52. Topologically, residues L53–T60 are cytoplasmic. Residues P61–P82 traverse the membrane as a helical segment. At A83 to Q103 the chain is on the extracellular side. A disulfide bridge links C100 with C192. A helical membrane pass occupies residues L104–Y123. Over D124–V143 the chain is Cytoplasmic. The helical transmembrane segment at Q144–T161 threads the bilayer. At H162 to E199 the chain is on the extracellular side. A helical transmembrane segment spans residues L200–A222. Residues H223–K239 are Cytoplasmic-facing. The helical transmembrane segment at A240–Y262 threads the bilayer. Over M263–K275 the chain is Extracellular. A helical membrane pass occupies residues G276–L295. Residues R296–T315 are Cytoplasmic-facing.

Belongs to the G-protein coupled receptor 1 family.

Its subcellular location is the cell membrane. In terms of biological role, odorant receptor. This chain is Olfactory receptor 3A3 (OR3A3), found in Pan troglodytes (Chimpanzee).